Reading from the N-terminus, the 498-residue chain is Zinc finger protein 682 (498 aa).

The 72-residue stretch at 4 to 75 (LTFRDVTIEF…KRHETIAKPP (72 aa)) folds into the KRAB domain. C2H2-type zinc fingers lie at residues 173-195 (FKCMQCGKVFKSHSGLSYHKIIH), 201-223 (CICEECGKTFKWFSYLTKHKRIH), 229-251 (YKCEECGKAFNWCSSLTKHKRIH), 257-279 (YKCEECGKAFHWCSPFVRHKKIH), 285-307 (YTCEDCGRAFNRHSHLTKHKTIH), 313-335 (YKCKECGKAFNHCSLLTIHERTH), 341-363 (YKCEECGKAFNSSSILTEHKVIH), 369-391 (YKCEKCDKVFKRFSYLTKHKRIH), 397-419 (YKCEECGKAFNWSSILTEHKRIH), and 425-447 (YNCEECGKAFNRCSHLTRHKKIH). Residues 453 to 475 (YKCEECGKAFKRCSHLNEHKRVQ) form a C2H2-type 11; degenerate zinc finger.

It belongs to the krueppel C2H2-type zinc-finger protein family.

Its subcellular location is the nucleus. Its function is as follows. May be involved in transcriptional regulation. In Homo sapiens (Human), this protein is Zinc finger protein 682 (ZNF682).